Consider the following 540-residue polypeptide: Chaperonin GroEL 1 (540 aa).

ATP contacts are provided by residues T29–P32, D86–T90, G413, N477–A479, and D493.

It belongs to the chaperonin (HSP60) family. As to quaternary structure, forms a cylinder of 14 subunits composed of two heptameric rings stacked back-to-back. Interacts with the co-chaperonin GroES.

It is found in the cytoplasm. The enzyme catalyses ATP + H2O + a folded polypeptide = ADP + phosphate + an unfolded polypeptide.. Functionally, together with its co-chaperonin GroES, plays an essential role in assisting protein folding. The GroEL-GroES system forms a nano-cage that allows encapsulation of the non-native substrate proteins and provides a physical environment optimized to promote and accelerate protein folding. This is Chaperonin GroEL 1 from Salinispora arenicola (strain CNS-205).